Reading from the N-terminus, the 134-residue chain is Putative pre-16S rRNA nuclease (134 aa).

The protein belongs to the YqgF nuclease family.

The protein localises to the cytoplasm. In terms of biological role, could be a nuclease involved in processing of the 5'-end of pre-16S rRNA. In Helicobacter pylori (strain HPAG1), this protein is Putative pre-16S rRNA nuclease.